The following is a 592-amino-acid chain: Aspartate--tRNA ligase (592 aa).

Glu171 is an L-aspartate binding site. Residues 195-198 (QLFK) are aspartate. Arg217 is a binding site for L-aspartate. ATP-binding positions include 217–219 (RDE) and Gln226. Residue His448 coordinates L-aspartate. Position 482 (Glu482) interacts with ATP. Arg489 is an L-aspartate binding site. 534 to 537 (GLDR) lines the ATP pocket.

It belongs to the class-II aminoacyl-tRNA synthetase family. Type 1 subfamily. Homodimer.

The protein localises to the cytoplasm. The enzyme catalyses tRNA(Asp) + L-aspartate + ATP = L-aspartyl-tRNA(Asp) + AMP + diphosphate. Catalyzes the attachment of L-aspartate to tRNA(Asp) in a two-step reaction: L-aspartate is first activated by ATP to form Asp-AMP and then transferred to the acceptor end of tRNA(Asp). The polypeptide is Aspartate--tRNA ligase (Vibrio vulnificus (strain YJ016)).